The primary structure comprises 406 residues: Oligouridylate-binding protein 1 (406 aa).

2 RRM domains span residues 49-123 (RSVY…WAYA) and 134-212 (YNIF…WAAK). Residues 231 to 250 (TSGTSDDGQEKVVNEDAPEN) are disordered. The RRM 3 domain occupies 255–329 (TTVYVGNLAP…KPVKCSWGSK (75 aa)).

It localises to the nucleus. In terms of biological role, heterogeneous nuclear ribonucleoprotein (hnRNP)-like protein that acts as a component of the pre-mRNA processing machinery. Functions to facilitate the nuclear maturation of plant pre-mRNAs. Binds with high affinity to RNA molecules that contain AU-rich regions. May bind to the 3'-UTR and protects the mRNA against exonucleolytic degradation. Associates with nuclear poly(A)+ RNA in nucleus in vivo. Does not stimulate transcription or the 3' end cleavage/polyadenylation reaction. This Nicotiana plumbaginifolia (Leadwort-leaved tobacco) protein is Oligouridylate-binding protein 1 (UBP1).